Reading from the N-terminus, the 274-residue chain is Thymidylate synthase (274 aa).

R21 contacts dUMP. H51 provides a ligand contact to (6R)-5,10-methylene-5,6,7,8-tetrahydrofolate. DUMP is bound at residue 123 to 124 (RR). Catalysis depends on C156, which acts as the Nucleophile. Residues 176–179 (RSAD), N187, and 217–219 (HIY) each bind dUMP. D179 serves as a coordination point for (6R)-5,10-methylene-5,6,7,8-tetrahydrofolate. A273 provides a ligand contact to (6R)-5,10-methylene-5,6,7,8-tetrahydrofolate.

The protein belongs to the thymidylate synthase family. Bacterial-type ThyA subfamily. As to quaternary structure, homodimer.

The protein localises to the cytoplasm. It catalyses the reaction dUMP + (6R)-5,10-methylene-5,6,7,8-tetrahydrofolate = 7,8-dihydrofolate + dTMP. Its pathway is pyrimidine metabolism; dTTP biosynthesis. Its function is as follows. Catalyzes the reductive methylation of 2'-deoxyuridine-5'-monophosphate (dUMP) to 2'-deoxythymidine-5'-monophosphate (dTMP) while utilizing 5,10-methylenetetrahydrofolate (mTHF) as the methyl donor and reductant in the reaction, yielding dihydrofolate (DHF) as a by-product. This enzymatic reaction provides an intracellular de novo source of dTMP, an essential precursor for DNA biosynthesis. In Christiangramia forsetii (strain DSM 17595 / CGMCC 1.15422 / KT0803) (Gramella forsetii), this protein is Thymidylate synthase.